A 339-amino-acid chain; its full sequence is tRNA N6-adenosine threonylcarbamoyltransferase (339 aa).

2 residues coordinate Fe cation: histidine 111 and histidine 115. Substrate is bound by residues 134–138 (LVSGG), aspartate 167, glycine 180, and asparagine 274. A Fe cation-binding site is contributed by aspartate 302.

This sequence belongs to the KAE1 / TsaD family. The cofactor is Fe(2+).

The protein resides in the cytoplasm. It catalyses the reaction L-threonylcarbamoyladenylate + adenosine(37) in tRNA = N(6)-L-threonylcarbamoyladenosine(37) in tRNA + AMP + H(+). In terms of biological role, required for the formation of a threonylcarbamoyl group on adenosine at position 37 (t(6)A37) in tRNAs that read codons beginning with adenine. Is involved in the transfer of the threonylcarbamoyl moiety of threonylcarbamoyl-AMP (TC-AMP) to the N6 group of A37, together with TsaE and TsaB. TsaD likely plays a direct catalytic role in this reaction. The sequence is that of tRNA N6-adenosine threonylcarbamoyltransferase from Methylobacillus flagellatus (strain ATCC 51484 / DSM 6875 / VKM B-1610 / KT).